A 438-amino-acid polypeptide reads, in one-letter code: 2-(3-amino-3-carboxypropyl)histidine synthase subunit 1 (438 aa).

Residues 7–29 (SGAAEQGGRDGPGRGRAPRGRVA) form a disordered region. Positions 110, 214, and 342 each coordinate [4Fe-4S] cluster. Residues 391–421 (VNHGQDRRPHAPGRPARGKVQEGSARPPSAV) form a disordered region.

Belongs to the DPH1/DPH2 family. DPH1 subfamily. As to quaternary structure, component of the 2-(3-amino-3-carboxypropyl)histidine synthase complex composed of DPH1, DPH2, DPH3 and a NADH-dependent reductase. Interacts with DPH2. Interacts with RBM8A. Requires [4Fe-4S] cluster as cofactor. In terms of tissue distribution, expressed in heart, brain, placenta, lung, liver, skeletal muscle, kidney, pancreas, spleen, thymus, mammary gland, colon, small intestine, testis and ovary. Reduced expression in primary breast and ovarian tumors.

Its subcellular location is the nucleus. The protein resides in the cytoplasm. The enzyme catalyses L-histidyl-[translation elongation factor 2] + S-adenosyl-L-methionine = 2-[(3S)-amino-3-carboxypropyl]-L-histidyl-[translation elongation factor 2] + S-methyl-5'-thioadenosine + H(+). Its pathway is protein modification; peptidyl-diphthamide biosynthesis. In terms of biological role, catalyzes the first step of diphthamide biosynthesis, a post-translational modification of histidine which occurs in elongation factor 2. DPH1 and DPH2 transfer a 3-amino-3-carboxypropyl (ACP) group from S-adenosyl-L-methionine (SAM) to a histidine residue, the reaction is assisted by a reduction system comprising DPH3 and a NADH-dependent reductase. Acts as a tumor suppressor. In Homo sapiens (Human), this protein is 2-(3-amino-3-carboxypropyl)histidine synthase subunit 1.